A 202-amino-acid chain; its full sequence is Ras-related protein RABD2b (202 aa).

GTP-binding positions include 15 to 23 (GDSGVGKSC), 33 to 40 (YLDSYIST), 63 to 67 (DTAGQ), 121 to 124 (NKND), and 151 to 153 (SAK). An Effector region motif is present at residues 37–45 (YISTIGVDF). The tract at residues 174–202 (ASQPAGGAKPPTVQIRGQPVNQQSGCCSS) is disordered. Positions 192-202 (PVNQQSGCCSS) are enriched in polar residues. 2 S-geranylgeranyl cysteine lipidation sites follow: C199 and C200.

The protein belongs to the small GTPase superfamily. Rab family.

It is found in the golgi apparatus. Its subcellular location is the trans-Golgi network membrane. It localises to the golgi apparatus membrane. Its function is as follows. Protein transport. Regulator of membrane traffic from the Golgi apparatus towards the endoplasmic reticulum (ER). In Arabidopsis thaliana (Mouse-ear cress), this protein is Ras-related protein RABD2b (RABD2B).